Reading from the N-terminus, the 94-residue chain is MLQSNEYFSGKVKSIGFTSSSIGRASVGVMAEGEYTFGTAEPEEMTVVSGALKVLLPGTVEWKVYTAGEVFNVPGHSEFHLQVAEPTSYLCRYL.

This sequence belongs to the nucleoside phosphorylase PpnP family.

The catalysed reaction is a purine D-ribonucleoside + phosphate = a purine nucleobase + alpha-D-ribose 1-phosphate. It carries out the reaction adenosine + phosphate = alpha-D-ribose 1-phosphate + adenine. It catalyses the reaction cytidine + phosphate = cytosine + alpha-D-ribose 1-phosphate. The enzyme catalyses guanosine + phosphate = alpha-D-ribose 1-phosphate + guanine. The catalysed reaction is inosine + phosphate = alpha-D-ribose 1-phosphate + hypoxanthine. It carries out the reaction thymidine + phosphate = 2-deoxy-alpha-D-ribose 1-phosphate + thymine. It catalyses the reaction uridine + phosphate = alpha-D-ribose 1-phosphate + uracil. The enzyme catalyses xanthosine + phosphate = alpha-D-ribose 1-phosphate + xanthine. Catalyzes the phosphorolysis of diverse nucleosides, yielding D-ribose 1-phosphate and the respective free bases. Can use uridine, adenosine, guanosine, cytidine, thymidine, inosine and xanthosine as substrates. Also catalyzes the reverse reactions. This chain is Pyrimidine/purine nucleoside phosphorylase, found in Salmonella newport (strain SL254).